Consider the following 29-residue polypeptide: Protein Tat (29 aa).

Positions 1 to 29 (PSSQPRGDPTGQEEPKKKVEKKTTTDPFD) are disordered. Residues 6–8 (RGD) carry the Cell attachment site motif. Residues 13-29 (EEPKKKVEKKTTTDPFD) show a composition bias toward basic and acidic residues.

This sequence belongs to the lentiviruses Tat family. As to quaternary structure, interacts with host CCNT1. Associates with the P-TEFb complex composed at least of Tat, P-TEFb (CDK9 and CCNT1), TAR RNA, RNA Pol II. Recruits the HATs CREBBP, TAF1/TFIID, EP300, PCAF and GCN5L2. Interacts with host KAT5/Tip60; this interaction targets the latter to degradation. Interacts with the host deacetylase SIRT1. Interacts with host capping enzyme RNGTT; this interaction stimulates RNGTT. Binds to host KDR, and to the host integrins ITGAV/ITGB3 and ITGA5/ITGB1. Interacts with host KPNB1/importin beta-1 without previous binding to KPNA1/importin alpha-1. Interacts with EIF2AK2. Interacts with host nucleosome assembly protein NAP1L1; this interaction may be required for the transport of Tat within the nucleus, since the two proteins interact at the nuclear rim. Interacts with host C1QBP/SF2P32; this interaction involves lysine-acetylated Tat. Interacts with the host chemokine receptors CCR2, CCR3 and CXCR4. Interacts with host DPP4/CD26; this interaction may trigger an anti-proliferative effect. Interacts with host LDLR. Interacts with the host extracellular matrix metalloproteinase MMP1. Interacts with host PRMT6; this interaction mediates Tat's methylation. Interacts with, and is ubiquitinated by MDM2/Hdm2. Interacts with host PSMC3 and HTATIP2. Interacts with STAB1; this interaction may overcome SATB1-mediated repression of IL2 and IL2RA (interleukin) in T cells by binding to the same domain than HDAC1. Interacts (when acetylated) with human CDK13, thereby increasing HIV-1 mRNA splicing and promoting the production of the doubly spliced HIV-1 protein Nef. Post-translationally, acetylation by EP300, CREBBP, GCN5L2/GCN5 and PCAF regulates the transactivation activity of Tat. In terms of processing, phosphorylated by EIF2AK2 on serine and threonine residues adjacent to the basic region important for TAR RNA binding and function. Phosphorylation of Tat by EIF2AK2 is dependent on the prior activation of EIF2AK2 by dsRNA. Asymmetrical arginine methylation by host PRMT6 seems to diminish the transactivation capacity of Tat and affects the interaction with host CCNT1. Post-translationally, polyubiquitination by MDM2 does not target Tat to degradation, but activates its transactivation function and fosters interaction with CCNT1 and TAR RNA.

The protein resides in the host nucleus. Its subcellular location is the host nucleolus. It localises to the host cytoplasm. It is found in the secreted. In terms of biological role, transcriptional activator that increases RNA Pol II processivity, thereby increasing the level of full-length viral transcripts. Recognizes a hairpin structure at the 5'-LTR of the nascent viral mRNAs referred to as the transactivation responsive RNA element (TAR) and recruits the cyclin T1-CDK9 complex (P-TEFb complex) that will in turn hyperphosphorylate the RNA polymerase II to allow efficient elongation. The CDK9 component of P-TEFb and other Tat-activated kinases hyperphosphorylate the C-terminus of RNA Pol II that becomes stabilized and much more processive. Other factors such as HTATSF1/Tat-SF1, SUPT5H/SPT5, and HTATIP2 are also important for Tat's function. Besides its effect on RNA Pol II processivity, Tat induces chromatin remodeling of proviral genes by recruiting the histone acetyltransferases (HATs) CREBBP, EP300 and PCAF to the chromatin. This also contributes to the increase in proviral transcription rate, especially when the provirus integrates in transcriptionally silent region of the host genome. To ensure maximal activation of the LTR, Tat mediates nuclear translocation of NF-kappa-B by interacting with host RELA. Through its interaction with host TBP, Tat may also modulate transcription initiation. Tat can reactivate a latently infected cell by penetrating in it and transactivating its LTR promoter. In the cytoplasm, Tat is thought to act as a translational activator of HIV-1 mRNAs. Its function is as follows. Extracellular circulating Tat can be endocytosed by surrounding uninfected cells via the binding to several surface receptors such as CD26, CXCR4, heparan sulfate proteoglycans (HSPG) or LDLR. Neurons are rarely infected, but they internalize Tat via their LDLR. Endosomal low pH allows Tat to cross the endosome membrane to enter the cytosol and eventually further translocate into the nucleus, thereby inducing severe cell dysfunctions ranging from cell activation to cell death. Through its interaction with nuclear HATs, Tat is potentially able to control the acetylation-dependent cellular gene expression. Tat seems to inhibit the HAT activity of KAT5/Tip60 and TAF1, and consequently modify the expression of specific cellular genes. Modulates the expression of many cellular genes involved in cell survival, proliferation or in coding for cytokines (such as IL10) or cytokine receptors. May be involved in the derepression of host interleukin IL2 expression. Mediates the activation of cyclin-dependent kinases and dysregulation of microtubule network. Tat plays a role in T-cell and neurons apoptosis. Tat induced neurotoxicity and apoptosis probably contribute to neuroAIDS. Host extracellular matrix metalloproteinase MMP1 cleaves Tat and decreases Tat's mediated neurotoxicity. Circulating Tat also acts as a chemokine-like and/or growth factor-like molecule that binds to specific receptors on the surface of the cells, affecting many cellular pathways. In the vascular system, Tat binds to ITGAV/ITGB3 and ITGA5/ITGB1 integrins dimers at the surface of endothelial cells and competes with bFGF for heparin-binding sites, leading to an excess of soluble bFGF. Binds to KDR/VEGFR-2. All these Tat-mediated effects enhance angiogenesis in Kaposi's sarcoma lesions. The protein is Protein Tat of Homo sapiens (Human).